The following is a 483-amino-acid chain: Probable 4-hydroxyphenylacetate 3-monooxygenase (483 aa).

Substrate-binding positions include 104–108 (RSPDY) and His-150. FAD contacts are provided by residues 150–152 (HTF), 156–159 (QVNR), and Thr-193. Position 206-207 (206-207 (AP)) interacts with substrate. Position 452–455 (452–455 (DPIR)) interacts with FAD.

This sequence belongs to the FADH(2)-utilizing monooxygenase family.

The enzyme catalyses 4-hydroxyphenylacetate + FADH2 + O2 = 3,4-dihydroxyphenylacetate + FAD + H2O + H(+). The protein operates within aromatic compound metabolism; 4-hydroxyphenylacetate degradation; pyruvate and succinate semialdehyde from 4-hydroxyphenylacetate: step 1/7. Its function is as follows. Catalyzes the hydroxylation of 4-hydroxyphenylacetic acid (4HPA), leading to the production of 3,4-dihydroxyphenylacetic acid (DHPA). The sequence is that of Probable 4-hydroxyphenylacetate 3-monooxygenase (yoaI) from Bacillus subtilis (strain 168).